The sequence spans 963 residues: Reversion-inducing cysteine-rich protein with Kazal motifs (963 aa).

The signal sequence occupies residues 1–28; that stretch reads MAAAVAAWPWALFCLAAVPPLLSPGAAG. Residues 31 to 78 form a Knot 1 repeat; sequence CCYHAKDNLMCRDVCEQILSSKSDSRLKHLLQRAPEYCPESMGEVWGC. A 5 X Knot repeats region spans residues 31–332; the sequence is CCYHAKDNLM…NAVEVSMLTC (302 aa). A glycan (N-linked (GlcNAc...) asparagine) is linked at Asn-80. Knot repeat units follow at residues 98–135 and 145–191; these read CCEL…LFSC and CCSY…LIHC. An N-linked (GlcNAc...) asparagine glycan is attached at Asn-194. 2 Knot repeats span residues 210 to 257 and 286 to 332; these read CCDR…LWQC and CCSK…MLTC. N-linked (GlcNAc...) asparagine glycans are attached at residues Asn-291 and Asn-346. Kazal-like domains lie at 621–667, 692–746, and 749–783; these read KFTG…SCIS, SFGK…PCQP, and KSVE…HCQA. Intrachain disulfides connect Cys-627–Cys-652, Cys-629–Cys-648, Cys-637–Cys-665, Cys-710–Cys-729, Cys-718–Cys-744, and Cys-755–Cys-781. A lipid anchor (GPI-anchor amidated serine) is attached at Ser-936. A propeptide spanning residues 937-963 is cleaved from the precursor; that stretch reads PSVKVGPVLHCLFISFSFTLLKLMDYI.

The protein belongs to the RECK family. As to quaternary structure, interacts (via knot repeats) with WNT7A (via disordered linker region); the interaction is direct. Interacts (via knot repeats) with WNT7B (via disordered linker region); the interaction is direct. Interacts with ADGRA2; the interaction is direct. Localizes to the plasma membrane via its GPI-anchor. Released from the plasma membrane following cleavage of the GPI-anchor by GDPD5/GPE2.

Its subcellular location is the cell membrane. Functions together with ADGRA2 to enable brain endothelial cells to selectively respond to Wnt7 signals (WNT7A or WNT7B). Plays a key role in Wnt7-specific responses: required for central nervous system (CNS) angiogenesis and blood-brain barrier regulation. Acts as a Wnt7-specific coactivator of canonical Wnt signaling by decoding Wnt ligands: acts by interacting specifically with the disordered linker region of Wnt7, thereby conferring ligand selectivity for Wnt7. ADGRA2 is then required to deliver RECK-bound Wnt7 to frizzled by assembling a higher-order RECK-ADGRA2-Fzd-LRP5-LRP6 complex. Also acts as a serine protease inhibitor. The polypeptide is Reversion-inducing cysteine-rich protein with Kazal motifs (Gallus gallus (Chicken)).